The primary structure comprises 373 residues: Type II secretion system protein L (373 aa).

Residues 1 to 214 (MTAWRDTLGR…RRSDPMQRWN (214 aa)) are Cytoplasmic-facing. The chain crosses the membrane as a helical span at residues 215-233 (LLLAVAALVLLAVAGWLLL). The Periplasmic portion of the chain corresponds to 234-373 (DNRRQAADDL…AKEAADAAQR (140 aa)).

This sequence belongs to the GSP L family. As to quaternary structure, type II secretion system is composed of four main components: the outer membrane complex, the inner membrane complex, the cytoplasmic secretion ATPase and the periplasm-spanning pseudopilus. Forms homodimers. Interacts with XpsM/GspM. Interacts with XpsE/GspE and XpsF/GspF.

The protein resides in the cell inner membrane. Inner membrane component of the type II secretion system required for the energy-dependent secretion of extracellular factors such as proteases and toxins from the periplasm. Plays a role in the complex assembly and recruits XpsM resulting in a stable complex in the inner membrane. Provides thus a link between the energy-providing XpsE protein in the cytoplasm and the rest of the T2SS machinery. In Xanthomonas campestris pv. campestris (strain ATCC 33913 / DSM 3586 / NCPPB 528 / LMG 568 / P 25), this protein is Type II secretion system protein L (pefL).